The sequence spans 576 residues: Glutamine-dependent NAD(+) synthetase (576 aa).

A CN hydrolase domain is found at 4–246 (LRVTLAQLNP…EEIITVDLDL (243 aa)). Catalysis depends on glutamate 44, which acts as the Proton acceptor; for glutaminase activity. The For glutaminase activity role is filled by lysine 112. Tyrosine 118 lines the L-glutamine pocket. Cysteine 148 serves as the catalytic Nucleophile; for glutaminase activity. L-glutamine is bound by residues serine 176 and lysine 182. The ligase stretch occupies residues 292 to 576 (PVREEEMFRA…PITNRFKEPL (285 aa)). 321-328 (GLSGGMDS) contacts ATP. Asparagine 404 lines the deamido-NAD(+) pocket. Threonine 428 contacts ATP. Deamido-NAD(+)-binding residues include glutamate 433 and lysine 545.

This sequence in the C-terminal section; belongs to the NAD synthetase family.

The enzyme catalyses deamido-NAD(+) + L-glutamine + ATP + H2O = L-glutamate + AMP + diphosphate + NAD(+) + H(+). It participates in cofactor biosynthesis; NAD(+) biosynthesis; NAD(+) from deamido-NAD(+) (L-Gln route): step 1/1. Functionally, catalyzes the ATP-dependent amidation of deamido-NAD to form NAD. Uses L-glutamine as a nitrogen source. In Thermotoga maritima (strain ATCC 43589 / DSM 3109 / JCM 10099 / NBRC 100826 / MSB8), this protein is Glutamine-dependent NAD(+) synthetase (nadE2).